The sequence spans 220 residues: Histone H1B (220 aa).

Disordered regions lie at residues 1–45 (MTAT…PSAS) and 99–220 (QVKG…APKK). Over residues 28 to 45 (KKVAGGAKAKKPSGPSAS) the composition is skewed to low complexity. The H15 domain maps to 40 to 113 (SGPSASELIV…GASGSFKLNK (74 aa)). Basic residues-rich tracts occupy residues 122 to 134 (AAKK…KAKK), 141 to 151 (KAPKSPKKPKK), 158 to 196 (SPKK…KPKT), and 204 to 220 (KVAK…APKK).

The protein belongs to the histone H1/H5 family.

The protein localises to the nucleus. The protein resides in the chromosome. Functionally, histones H1 are necessary for the condensation of nucleosome chains into higher-order structures. The polypeptide is Histone H1B (Xenopus laevis (African clawed frog)).